The following is a 231-amino-acid chain: 2-C-methyl-D-erythritol 4-phosphate cytidylyltransferase (231 aa).

This sequence belongs to the IspD/TarI cytidylyltransferase family. IspD subfamily.

It catalyses the reaction 2-C-methyl-D-erythritol 4-phosphate + CTP + H(+) = 4-CDP-2-C-methyl-D-erythritol + diphosphate. It functions in the pathway isoprenoid biosynthesis; isopentenyl diphosphate biosynthesis via DXP pathway; isopentenyl diphosphate from 1-deoxy-D-xylulose 5-phosphate: step 2/6. Its function is as follows. Catalyzes the formation of 4-diphosphocytidyl-2-C-methyl-D-erythritol from CTP and 2-C-methyl-D-erythritol 4-phosphate (MEP). This chain is 2-C-methyl-D-erythritol 4-phosphate cytidylyltransferase, found in Rubrobacter xylanophilus (strain DSM 9941 / JCM 11954 / NBRC 16129 / PRD-1).